The following is a 184-amino-acid chain: NADH-quinone oxidoreductase subunit B (184 aa).

Residues Cys-63, Cys-64, Cys-128, and Cys-158 each coordinate [4Fe-4S] cluster.

This sequence belongs to the complex I 20 kDa subunit family. NDH-1 is composed of 14 different subunits. Subunits NuoB, C, D, E, F, and G constitute the peripheral sector of the complex. [4Fe-4S] cluster is required as a cofactor.

It is found in the cell inner membrane. The catalysed reaction is a quinone + NADH + 5 H(+)(in) = a quinol + NAD(+) + 4 H(+)(out). NDH-1 shuttles electrons from NADH, via FMN and iron-sulfur (Fe-S) centers, to quinones in the respiratory chain. Couples the redox reaction to proton translocation (for every two electrons transferred, four hydrogen ions are translocated across the cytoplasmic membrane), and thus conserves the redox energy in a proton gradient. This Xylella fastidiosa (strain 9a5c) protein is NADH-quinone oxidoreductase subunit B.